Reading from the N-terminus, the 342-residue chain is S-adenosylmethionine:tRNA ribosyltransferase-isomerase (342 aa).

Belongs to the QueA family. In terms of assembly, monomer.

Its subcellular location is the cytoplasm. It catalyses the reaction 7-aminomethyl-7-carbaguanosine(34) in tRNA + S-adenosyl-L-methionine = epoxyqueuosine(34) in tRNA + adenine + L-methionine + 2 H(+). It participates in tRNA modification; tRNA-queuosine biosynthesis. In terms of biological role, transfers and isomerizes the ribose moiety from AdoMet to the 7-aminomethyl group of 7-deazaguanine (preQ1-tRNA) to give epoxyqueuosine (oQ-tRNA). This chain is S-adenosylmethionine:tRNA ribosyltransferase-isomerase, found in Campylobacter jejuni subsp. jejuni serotype O:2 (strain ATCC 700819 / NCTC 11168).